The primary structure comprises 197 residues: Large ribosomal subunit protein uL22 (197 aa).

The tract at residues 118 to 197 is disordered; the sequence is ESRPAKDQRS…ETSAAKGGSD (80 aa). A compositionally biased stretch (low complexity) spans 149-165; sequence APAKKAAAKAPAKKAPA. A compositionally biased stretch (basic residues) spans 172 to 183; the sequence is TPAKKAPAKKAP. Over residues 184–197 the composition is skewed to low complexity; that stretch reads AKASETSAAKGGSD.

Belongs to the universal ribosomal protein uL22 family. As to quaternary structure, part of the 50S ribosomal subunit.

In terms of biological role, this protein binds specifically to 23S rRNA; its binding is stimulated by other ribosomal proteins, e.g. L4, L17, and L20. It is important during the early stages of 50S assembly. It makes multiple contacts with different domains of the 23S rRNA in the assembled 50S subunit and ribosome. Its function is as follows. The globular domain of the protein is located near the polypeptide exit tunnel on the outside of the subunit, while an extended beta-hairpin is found that lines the wall of the exit tunnel in the center of the 70S ribosome. The polypeptide is Large ribosomal subunit protein uL22 (Mycobacterium bovis (strain ATCC BAA-935 / AF2122/97)).